A 307-amino-acid chain; its full sequence is Dihydroorotate dehydrogenase A (fumarate) (307 aa).

Residues S21 and 46 to 47 contribute to the FMN site; that span reads KT. Residues K46, 70–74, and N130 contribute to the substrate site; that span reads NSVGL. FMN is bound at residue N130. The Nucleophile role is filled by C133. FMN contacts are provided by K168 and I194. 195 to 196 lines the substrate pocket; that stretch reads NT. FMN-binding positions include G220, 246 to 247, and 268 to 269; these read GG and GS.

This sequence belongs to the dihydroorotate dehydrogenase family. Type 1 subfamily. As to quaternary structure, homodimer. The cofactor is FMN.

It is found in the cytoplasm. It carries out the reaction (S)-dihydroorotate + fumarate = orotate + succinate. The protein operates within pyrimidine metabolism; UMP biosynthesis via de novo pathway. Catalyzes the conversion of dihydroorotate to orotate with fumarate as the electron acceptor. This Lactobacillus helveticus (strain DPC 4571) protein is Dihydroorotate dehydrogenase A (fumarate) (pyrD).